A 71-amino-acid polypeptide reads, in one-letter code: Biotinylated protein TB7.3 (71 aa).

Residues A2–S71 enclose the Biotinyl-binding domain. Residue K37 is modified to N6-biotinyllysine.

This chain is Biotinylated protein TB7.3, found in Mycobacterium bovis (strain ATCC BAA-935 / AF2122/97).